Reading from the N-terminus, the 120-residue chain is NAD(P)H-quinone oxidoreductase subunit 3, chloroplastic (120 aa).

Transmembrane regions (helical) follow at residues 9–29 (IFWAFLIISSAIPVLAFLISG), 64–84 (MFALVFVVFDVETVFLYPWAM), and 88–108 (VLGVSAFIEAFIFVLILILGL).

The protein belongs to the complex I subunit 3 family. NDH is composed of at least 16 different subunits, 5 of which are encoded in the nucleus.

It is found in the plastid. The protein resides in the chloroplast thylakoid membrane. The catalysed reaction is a plastoquinone + NADH + (n+1) H(+)(in) = a plastoquinol + NAD(+) + n H(+)(out). It catalyses the reaction a plastoquinone + NADPH + (n+1) H(+)(in) = a plastoquinol + NADP(+) + n H(+)(out). NDH shuttles electrons from NAD(P)H:plastoquinone, via FMN and iron-sulfur (Fe-S) centers, to quinones in the photosynthetic chain and possibly in a chloroplast respiratory chain. The immediate electron acceptor for the enzyme in this species is believed to be plastoquinone. Couples the redox reaction to proton translocation, and thus conserves the redox energy in a proton gradient. In Lobularia maritima (Sweet alyssum), this protein is NAD(P)H-quinone oxidoreductase subunit 3, chloroplastic.